A 130-amino-acid chain; its full sequence is Splicing regulatory small protein (130 aa).

Residues 1–10 are compositionally biased toward basic residues; the sequence is MRTKPQRPRA. 2 disordered regions span residues 1 to 29 and 74 to 130; these read MRTK…EETG and GRAL…STRR. The interval 16–22 is mediates interaction with SRSF3; the sequence is GQPCGSP. Over residues 77–98 the composition is skewed to basic and acidic residues; sequence LEPKADPHTCPYGRKESRGEKV. The segment covering 120 to 130 has biased composition (polar residues); the sequence is SLKSGSPSTRR.

In terms of assembly, interacts with SRSF3; increases SRSF3 binding to specific exons.

The protein resides in the nucleus. Interacts with the splicing factor SRSF3 and increases its binding to specific exons within pre-mRNA, thereby regulating exon-inclusion during alternative splicing. Does not directly bind pre-mRNA and could regulate a wider range of splicing factors through a similar mechanism. This is Splicing regulatory small protein from Homo sapiens (Human).